Here is a 158-residue protein sequence, read N- to C-terminus: NAD(P)H-quinone oxidoreductase subunit J, chloroplastic (158 aa).

The protein belongs to the complex I 30 kDa subunit family. As to quaternary structure, NDH is composed of at least 16 different subunits, 5 of which are encoded in the nucleus.

Its subcellular location is the plastid. It localises to the chloroplast thylakoid membrane. It carries out the reaction a plastoquinone + NADH + (n+1) H(+)(in) = a plastoquinol + NAD(+) + n H(+)(out). The enzyme catalyses a plastoquinone + NADPH + (n+1) H(+)(in) = a plastoquinol + NADP(+) + n H(+)(out). NDH shuttles electrons from NAD(P)H:plastoquinone, via FMN and iron-sulfur (Fe-S) centers, to quinones in the photosynthetic chain and possibly in a chloroplast respiratory chain. The immediate electron acceptor for the enzyme in this species is believed to be plastoquinone. Couples the redox reaction to proton translocation, and thus conserves the redox energy in a proton gradient. This chain is NAD(P)H-quinone oxidoreductase subunit J, chloroplastic, found in Lotus japonicus (Lotus corniculatus var. japonicus).